The following is an 81-amino-acid chain: Cytotoxin 4N (81 aa).

Positions 1–21 (MKTLLLTLVVVTIVCLDLGYT) are cleaved as a signal peptide. Intrachain disulfides connect cysteine 24-cysteine 42, cysteine 35-cysteine 59, cysteine 63-cysteine 74, and cysteine 75-cysteine 80.

The protein belongs to the three-finger toxin family. Short-chain subfamily. Type IA cytotoxin sub-subfamily. In terms of assembly, monomer in solution; Homodimer and oligomer in the presence of negatively charged lipids forming a pore with a size ranging between 20 and 30 Angstroms. In terms of tissue distribution, expressed by the venom gland.

It localises to the secreted. Its subcellular location is the target cell membrane. Its function is as follows. Shows cytolytic activity on many different cells by forming pore in lipid membranes. In vivo, increases heart rate or kills the animal by cardiac arrest. In addition, it binds to heparin with high affinity, interacts with Kv channel-interacting protein 1 (KCNIP1) in a calcium-independent manner, and binds to integrin alpha-V/beta-3 (ITGAV/ITGB3) with moderate affinity. In Naja atra (Chinese cobra), this protein is Cytotoxin 4N.